Consider the following 187-residue polypeptide: Elongation factor P (187 aa).

The protein belongs to the elongation factor P family.

Its subcellular location is the cytoplasm. The protein operates within protein biosynthesis; polypeptide chain elongation. Involved in peptide bond synthesis. Stimulates efficient translation and peptide-bond synthesis on native or reconstituted 70S ribosomes in vitro. Probably functions indirectly by altering the affinity of the ribosome for aminoacyl-tRNA, thus increasing their reactivity as acceptors for peptidyl transferase. In Tolumonas auensis (strain DSM 9187 / NBRC 110442 / TA 4), this protein is Elongation factor P.